The following is a 432-amino-acid chain: Cytochrome c biogenesis protein CcsB (432 aa).

The next 3 membrane-spanning stretches (helical) occupy residues 18–38 (LRLA…GTGI), 76–96 (SGWF…CSWR), and 166–186 (VGPL…AWGA).

Belongs to the Ccs1/CcsB family. As to quaternary structure, may interact with CcsA.

The protein localises to the cellular thylakoid membrane. In terms of biological role, required during biogenesis of c-type cytochromes (cytochrome c6 and cytochrome f) at the step of heme attachment. The chain is Cytochrome c biogenesis protein CcsB from Synechococcus sp. (strain CC9605).